The chain runs to 340 residues: C5a anaphylatoxin chemotactic receptor 1 (340 aa).

Residues 1-30 (TPDYGHYDDKDTLDANTPVDKTSNTLRVPD) lie on the Extracellular side of the membrane. The required for CHIPS binding stretch occupies residues 3–11 (DYGHYDDKD). Sulfotyrosine occurs at positions 4 and 7. The interval 14-23 (DANTPVDKTS) is involved in C5a binding. The chain crosses the membrane as a helical span at residues 31 to 57 (ILALVIFAVVFLVGVLRNALVVWVTAF). Residues 58–62 (EAKRT) are Cytoplasmic-facing. The chain crosses the membrane as a helical span at residues 63 to 86 (INAIWFLNLAVADFLSCLALPILF). The Extracellular segment spans residues 87-103 (TSIVQHHHWPFGGAACR). C102 and C181 are joined by a disulfide. Residues 104–125 (ILPSLILLNMYASILLLATISA) traverse the membrane as a helical segment. The Cytoplasmic portion of the chain corresponds to 126–146 (DRFLLVFNPIWCQNFRGAGLA). Residues 147-167 (WIACAVAWGLALLLTIPSFLY) form a helical membrane-spanning segment. Over 168-193 (RVVREEYFPPKVLCGVDHGHDKRRER) the chain is Extracellular. Residues 194-219 (AVAIARLVLGFVWPLLTLTMCYTFLL) form a helical membrane-spanning segment. The Cytoplasmic portion of the chain corresponds to 220–235 (LRTWSRRATRSTKTLK). A helical membrane pass occupies residues 236–258 (VVVAVVASFFIFWLPYQVTGMMM). The Extracellular portion of the chain corresponds to 259–275 (SFLEPSSPTFLLLKKLD). A helical membrane pass occupies residues 276-296 (SLCISFAYINCCINPIIYVVA). Residues 297 to 340 (GQGFQGRLRKSLPSLLRNVLTEESMVRESKSFTRSTVDTMAQKT) are Cytoplasmic-facing. S307, S310, S320, S325, S327, and S331 each carry phosphoserine.

This sequence belongs to the G-protein coupled receptor 1 family. As to quaternary structure, homodimer. May also form higher-order oligomers. Interacts (when phosphorylated) with ARRB1 and ARRB2; the interaction is associated with internalization of C5aR. Interacts (via N-terminal domain) with S.aureus chemotaxis inhibitory protein (CHIPS); the interaction blocks the receptor and may thus inhibit the immune response. Sulfation plays a critical role in the association of C5aR with C5a, but no significant role in the ability of the receptor to transduce a signal and mobilize calcium in response to a small peptide agonist. Sulfation at Tyr-7 is important for CHIPS binding. Post-translationally, phosphorylated on serine residues in response to C5a binding, resulting in internalization of the receptor and short-term desensitization to C5a.

Its subcellular location is the cell membrane. The protein resides in the cytoplasmic vesicle. Receptor for the chemotactic and inflammatory peptide anaphylatoxin C5a. The ligand interacts with at least two sites on the receptor: a high-affinity site on the extracellular N-terminus, and a second site in the transmembrane region which activates downstream signaling events. Receptor activation stimulates chemotaxis, granule enzyme release, intracellular calcium release and superoxide anion production. The polypeptide is C5a anaphylatoxin chemotactic receptor 1 (C5AR1) (Macaca mulatta (Rhesus macaque)).